A 524-amino-acid chain; its full sequence is Cytochrome P450 1A1 (524 aa).

The segment at tryptophan 33–proline 44 is mitochondrial targeting signal. Serine 71 is a glycosylation site (O-linked (GlcNAc) serine). Phenylalanine 228 contacts substrate. Cysteine 461 contacts heme.

The protein belongs to the cytochrome P450 family. In terms of assembly, interacts with cytosolic chaperones HSP70 and HSP90; this interaction is required for initial targeting to mitochondria. Interacts (via mitochondrial targeting signal) with TOMM40 (via N-terminus); this interaction is required for translocation across the mitochondrial outer membrane. The cofactor is heme.

The protein localises to the endoplasmic reticulum membrane. The protein resides in the mitochondrion inner membrane. It is found in the microsome membrane. It localises to the cytoplasm. The enzyme catalyses an organic molecule + reduced [NADPH--hemoprotein reductase] + O2 = an alcohol + oxidized [NADPH--hemoprotein reductase] + H2O + H(+). The catalysed reaction is estrone + reduced [NADPH--hemoprotein reductase] + O2 = 2-hydroxyestrone + oxidized [NADPH--hemoprotein reductase] + H2O + H(+). It catalyses the reaction estrone + reduced [NADPH--hemoprotein reductase] + O2 = 4-hydroxyestrone + oxidized [NADPH--hemoprotein reductase] + H2O + H(+). It carries out the reaction estrone + reduced [NADPH--hemoprotein reductase] + O2 = 6alpha-hydroxyestrone + oxidized [NADPH--hemoprotein reductase] + H2O + H(+). The enzyme catalyses estrone + reduced [NADPH--hemoprotein reductase] + O2 = 15alpha-hydroxyestrone + oxidized [NADPH--hemoprotein reductase] + H2O + H(+). The catalysed reaction is estrone + reduced [NADPH--hemoprotein reductase] + O2 = 16alpha-hydroxyestrone + oxidized [NADPH--hemoprotein reductase] + H2O + H(+). It catalyses the reaction 17beta-estradiol + reduced [NADPH--hemoprotein reductase] + O2 = 2-hydroxy-17beta-estradiol + oxidized [NADPH--hemoprotein reductase] + H2O + H(+). It carries out the reaction 17beta-estradiol + reduced [NADPH--hemoprotein reductase] + O2 = 4-hydroxy-17beta-estradiol + oxidized [NADPH--hemoprotein reductase] + H2O + H(+). The enzyme catalyses 17beta-estradiol + reduced [NADPH--hemoprotein reductase] + O2 = 6alpha-hydroxy-17beta-estradiol + oxidized [NADPH--hemoprotein reductase] + H2O + H(+). The catalysed reaction is 17beta-estradiol + reduced [NADPH--hemoprotein reductase] + O2 = 7alpha-hydroxy-17beta-estradiol + oxidized [NADPH--hemoprotein reductase] + H2O + H(+). It catalyses the reaction 17beta-estradiol + reduced [NADPH--hemoprotein reductase] + O2 = 15alpha-hydroxy-17beta-estradiol + oxidized [NADPH--hemoprotein reductase] + H2O + H(+). It carries out the reaction (5Z,8Z,11Z)-eicosatrienoate + reduced [NADPH--hemoprotein reductase] + O2 = 19-hydroxy-(5Z,8Z,11Z)-eicosatrienoate + oxidized [NADPH--hemoprotein reductase] + H2O + H(+). The enzyme catalyses (5Z,8Z,11Z,14Z)-eicosatetraenoate + reduced [NADPH--hemoprotein reductase] + O2 = 16-hydroxy-(5Z,8Z,11Z,14Z)-eicosatetraenoate + oxidized [NADPH--hemoprotein reductase] + H2O + H(+). The catalysed reaction is (5Z,8Z,11Z,14Z)-eicosatetraenoate + reduced [NADPH--hemoprotein reductase] + O2 = 17-hydroxy-(5Z,8Z,11Z,14Z)-eicosatetraenoate + oxidized [NADPH--hemoprotein reductase] + H2O + H(+). It catalyses the reaction (5Z,8Z,11Z,14Z)-eicosatetraenoate + reduced [NADPH--hemoprotein reductase] + O2 = 18-hydroxy-(5Z,8Z,11Z,14Z)-eicosatetraenoate + oxidized [NADPH--hemoprotein reductase] + H2O + H(+). It carries out the reaction (5Z,8Z,11Z,14Z)-eicosatetraenoate + reduced [NADPH--hemoprotein reductase] + O2 = 19-hydroxy-(5Z,8Z,11Z,14Z)-eicosatetraenoate + oxidized [NADPH--hemoprotein reductase] + H2O + H(+). The enzyme catalyses (5Z,8Z,11Z,14Z,17Z)-eicosapentaenoate + reduced [NADPH--hemoprotein reductase] + O2 = 19-hydroxy-(5Z,8Z,11Z,14Z,17Z)-eicosapentaenoate + oxidized [NADPH--hemoprotein reductase] + H2O + H(+). The catalysed reaction is (5Z,8Z,11Z,14Z)-eicosatetraenoate + reduced [NADPH--hemoprotein reductase] + O2 = (8R,9S)-epoxy-(5Z,11Z,14Z)-eicosatrienoate + oxidized [NADPH--hemoprotein reductase] + H2O + H(+). It catalyses the reaction (5Z,8Z,11Z,14Z)-eicosatetraenoate + reduced [NADPH--hemoprotein reductase] + O2 = (11R,12S)-epoxy-(5Z,8Z,14Z)-eicosatrienoate + oxidized [NADPH--hemoprotein reductase] + H2O + H(+). It carries out the reaction (5Z,8Z,11Z,14Z)-eicosatetraenoate + reduced [NADPH--hemoprotein reductase] + O2 = (14S,15R)-epoxy-(5Z,8Z,11Z)-eicosatrienoate + oxidized [NADPH--hemoprotein reductase] + H2O + H(+). The enzyme catalyses (5Z,8Z,11Z,14Z)-eicosatetraenoate + reduced [NADPH--hemoprotein reductase] + O2 = (14R,15S)-epoxy-(5Z,8Z,11Z)-eicosatrienoate + oxidized [NADPH--hemoprotein reductase] + H2O + H(+). The catalysed reaction is (5Z,8Z,11Z,14Z,17Z)-eicosapentaenoate + reduced [NADPH--hemoprotein reductase] + O2 = (17R,18S)-epoxy-(5Z,8Z,11Z,14Z)-eicosatetraenoate + oxidized [NADPH--hemoprotein reductase] + H2O + H(+). It catalyses the reaction (4Z,7Z,10Z,13Z,16Z,19Z)-docosahexaenoate + reduced [NADPH--hemoprotein reductase] + O2 = (19S,20R)-epoxy-(4Z,7Z,10Z,13Z,16Z)-docosapentaenoate + oxidized [NADPH--hemoprotein reductase] + H2O + H(+). It carries out the reaction (4Z,7Z,10Z,13Z,16Z,19Z)-docosahexaenoate + reduced [NADPH--hemoprotein reductase] + O2 = (19R,20S)-epoxy-(4Z,7Z,10Z,13Z,16Z)-docosapentaenoate + oxidized [NADPH--hemoprotein reductase] + H2O + H(+). The enzyme catalyses all-trans-retinol + reduced [NADPH--hemoprotein reductase] + O2 = all-trans-retinal + oxidized [NADPH--hemoprotein reductase] + 2 H2O + H(+). The catalysed reaction is all-trans-retinal + reduced [NADPH--hemoprotein reductase] + O2 = all-trans-retinoate + oxidized [NADPH--hemoprotein reductase] + H2O + 2 H(+). It catalyses the reaction (13S)-hydroperoxy-(9Z,11E)-octadecadienoate = 13-oxo-(9Z,11E)-octadecadienoate + H2O. It carries out the reaction (12S)-hydroperoxy-(5Z,8Z,10E,14Z)-eicosatetraenoate = 12-oxo-(5Z,8Z,10E,14Z)-eicosatetraenoate + H2O. The enzyme catalyses (15S)-hydroperoxy-(5Z,8Z,11Z,13E)-eicosatetraenoate = 15-oxo-(5Z,8Z,11Z,13E)-eicosatetraenoate + H2O. The catalysed reaction is (5S)-hydroperoxy-(6E,8Z,11Z,14Z)-eicosatetraenoate = 5-oxo-(6E,8Z,11Z,14Z)-eicosatetraenoate + H2O. The protein operates within steroid hormone biosynthesis. It functions in the pathway lipid metabolism; fatty acid metabolism. It participates in cofactor metabolism; retinol metabolism. In terms of biological role, a cytochrome P450 monooxygenase involved in the metabolism of various endogenous substrates, including fatty acids, steroid hormones and vitamins. Mechanistically, uses molecular oxygen inserting one oxygen atom into a substrate, and reducing the second into a water molecule, with two electrons provided by NADPH via cytochrome P450 reductase (CPR; NADPH-ferrihemoprotein reductase). Catalyzes the hydroxylation of carbon-hydrogen bonds. Exhibits high catalytic activity for the formation of hydroxyestrogens from estrone (E1) and 17beta-estradiol (E2), namely 2-hydroxy E1 and E2, as well as D-ring hydroxylated E1 and E2 at the C15alpha and C16alpha positions. Displays different regioselectivities for polyunsaturated fatty acids (PUFA) hydroxylation. Catalyzes the epoxidation of double bonds of certain PUFA. Converts arachidonic acid toward epoxyeicosatrienoic acid (EET) regioisomers, 8,9-, 11,12-, and 14,15-EET, that function as lipid mediators in the vascular system. Displays an absolute stereoselectivity in the epoxidation of eicosapentaenoic acid (EPA) producing the 17(R),18(S) enantiomer. May play an important role in all-trans retinoic acid biosynthesis in extrahepatic tissues. Catalyzes two successive oxidative transformation of all-trans retinol to all-trans retinal and then to the active form all-trans retinoic acid. May also participate in eicosanoids metabolism by converting hydroperoxide species into oxo metabolites (lipoxygenase-like reaction, NADPH-independent). This Canis lupus familiaris (Dog) protein is Cytochrome P450 1A1 (CYP1A1).